Here is a 309-residue protein sequence, read N- to C-terminus: Cilia-and flagella-associated protein 96 (309 aa).

Residues 220 to 249 are disordered; sequence EEKKKTISNTFKPSSPGKKPGGMKAGTFDP.

This sequence belongs to the CFAP96 family. Detected in testis and fetal liver.

The protein localises to the cytoplasm. It is found in the cytoskeleton. Its subcellular location is the microtubule organizing center. The protein resides in the centrosome. The protein is Cilia-and flagella-associated protein 96 of Homo sapiens (Human).